An 887-amino-acid chain; its full sequence is Alanine--tRNA ligase (887 aa).

Zn(2+) contacts are provided by His581, His585, Cys683, and His687.

It belongs to the class-II aminoacyl-tRNA synthetase family. Zn(2+) serves as cofactor.

The protein resides in the cytoplasm. The enzyme catalyses tRNA(Ala) + L-alanine + ATP = L-alanyl-tRNA(Ala) + AMP + diphosphate. In terms of biological role, catalyzes the attachment of alanine to tRNA(Ala) in a two-step reaction: alanine is first activated by ATP to form Ala-AMP and then transferred to the acceptor end of tRNA(Ala). Also edits incorrectly charged Ser-tRNA(Ala) and Gly-tRNA(Ala) via its editing domain. In Ehrlichia chaffeensis (strain ATCC CRL-10679 / Arkansas), this protein is Alanine--tRNA ligase.